Consider the following 467-residue polypeptide: Glutamate--tRNA ligase (467 aa).

The 'HIGH' region motif lies at 9 to 19; the sequence is PSPTGYLHIGG. A 'KMSKS' region motif is present at residues 237–241; the sequence is KLSKR. Lys240 serves as a coordination point for ATP.

Belongs to the class-I aminoacyl-tRNA synthetase family. Glutamate--tRNA ligase type 1 subfamily. In terms of assembly, monomer.

The protein resides in the cytoplasm. The enzyme catalyses tRNA(Glu) + L-glutamate + ATP = L-glutamyl-tRNA(Glu) + AMP + diphosphate. Its function is as follows. Catalyzes the attachment of glutamate to tRNA(Glu) in a two-step reaction: glutamate is first activated by ATP to form Glu-AMP and then transferred to the acceptor end of tRNA(Glu). In Xylella fastidiosa (strain M23), this protein is Glutamate--tRNA ligase.